Reading from the N-terminus, the 455-residue chain is MSFTIAIIGRPNVGKSTLFNRLVGQKLALVDDEPGVTRDRREGQARLGDLDFTVIDTAGLDEGPRGSLTARMQEQTEAAIAAADALMFVFDARAGLTPTDRSFADFARRADKPVVLVANKSEGRHGDAGALESYALGLGDPVGVSAEHDEGMSDLYDALRSVMPEPAEEVDEEEIVEPDMSRPIRVAIVGRPNAGKSTVINYLLSEERLLTSPEAGTTRDSISVELNWKGRDFRIFDTAGLRRRSRIEAKLEKLSVADTLRAVRFAEAVVLMMDAQNRFEEQDLRIADLIEREGRALVIAVNKWDLMKGGSARIASLRNDVDHWLPQIRGAPVVAISGLTGEGIDRLMIAIQTAYAVWNRRVATALLNRWFQQAVAASPPPAVSGRRLKLNYATQTKARPPSFVVFCSRADAVPESYLRYLVNSLRETFDLAGTPIRITLREKANPFAHKRKRKS.

2 consecutive EngA-type G domains span residues 3-167 (FTIA…PEPA) and 184-359 (IRVA…AVWN). Residues 9–16 (GRPNVGKS), 56–60 (DTAGL), 119–122 (NKSE), 190–197 (GRPNAGKS), 237–241 (DTAGL), and 302–305 (NKWD) contribute to the GTP site. A KH-like domain is found at 360-444 (RRVATALLNR…PIRITLREKA (85 aa)).

Belongs to the TRAFAC class TrmE-Era-EngA-EngB-Septin-like GTPase superfamily. EngA (Der) GTPase family. As to quaternary structure, associates with the 50S ribosomal subunit.

Its function is as follows. GTPase that plays an essential role in the late steps of ribosome biogenesis. This chain is GTPase Der, found in Nitrobacter winogradskyi (strain ATCC 25391 / DSM 10237 / CIP 104748 / NCIMB 11846 / Nb-255).